We begin with the raw amino-acid sequence, 276 residues long: ARL14 effector protein (276 aa).

The interval 158–177 (KQTEFAPEGGKREKRKLTKA) is disordered. K176 participates in a covalent cross-link: Glycyl lysine isopeptide (Lys-Gly) (interchain with G-Cter in SUMO2). Phosphoserine is present on residues S182 and S266.

In terms of assembly, interacts with ARL14 and MYO1E.

The protein resides in the cytoplasm. Through its interaction with ARL14 and MYO1E, may connect MHC class II-containing cytoplasmic vesicles to the actin network and hence controls the movement of these vesicles along the actin cytoskeleton in dendritic cells. The sequence is that of ARL14 effector protein (Arl14ep) from Mus musculus (Mouse).